The chain runs to 858 residues: GDP-fucose protein O-fucosyltransferase 2 (858 aa).

The Cytoplasmic segment spans residues 1–150 (MHCQLGGQAR…RPPCLLNHRR (150 aa)). Residues 151-171 (LLLGLVSVLTVFLSCLPFTNA) form a helical; Signal-anchor for type II membrane protein membrane-spanning segment. The Lumenal portion of the chain corresponds to 172–858 (TVSPAALQDV…WPSLDPSSTL (687 aa)). 237–241 (GEGFH) contacts GDP-beta-L-fucose. The active-site Proton acceptor is the glutamate 238. The disordered stretch occupies residues 448–510 (AALTPQERQR…SRSRKEIQEE (63 aa)). The segment covering 486–510 (DGEREKRKPGRRSDTSRSRKEIQEE) has biased composition (basic and acidic residues). GDP-beta-L-fucose contacts are provided by residues 646–648 (HLR) and 787–788 (RF). The segment at 819–858 (TGGQAQGKCFATKSHDPPEGRSRSELRRKYWPSLDPSSTL) is disordered. The segment covering 831–846 (KSHDPPEGRSRSELRR) has biased composition (basic and acidic residues).

This sequence belongs to the glycosyltransferase 68 family.

Its subcellular location is the endoplasmic reticulum membrane. The catalysed reaction is L-seryl-[protein] + GDP-beta-L-fucose = 3-O-(alpha-L-fucosyl)-L-seryl-[protein] + GDP + H(+). It carries out the reaction L-threonyl-[protein] + GDP-beta-L-fucose = 3-O-(alpha-L-fucosyl)-L-threonyl-[protein] + GDP + H(+). It functions in the pathway protein modification; protein glycosylation. Catalyzes the reaction that attaches fucose through an O-glycosidic linkage to a conserved serine or threonine residue in the consensus sequence C1-X-X-S/T-C2 of thrombospondin type I repeats (TSRs) where C1 and C2 are the first and second cysteines of the repeat, respectively. O-fucosylates microneme protein MIC2 and may play a role in its stabilization. Probably by regulating protein O-fucosylation, may play a role in tachyzoite adhesion to and/or invasion of host cells; however, POFUT2 involvement in adhesion/invasion is controversial. The sequence is that of GDP-fucose protein O-fucosyltransferase 2 from Toxoplasma gondii (strain ATCC 50853 / GT1).